The chain runs to 396 residues: NADH-quinone oxidoreductase subunit D 1 (396 aa).

It belongs to the complex I 49 kDa subunit family. As to quaternary structure, NDH-1 is composed of 14 different subunits. Subunits NuoB, C, D, E, F, and G constitute the peripheral sector of the complex.

It localises to the cell inner membrane. The catalysed reaction is a quinone + NADH + 5 H(+)(in) = a quinol + NAD(+) + 4 H(+)(out). NDH-1 shuttles electrons from NADH, via FMN and iron-sulfur (Fe-S) centers, to quinones in the respiratory chain. The immediate electron acceptor for the enzyme in this species is believed to be ubiquinone. Couples the redox reaction to proton translocation (for every two electrons transferred, four hydrogen ions are translocated across the cytoplasmic membrane), and thus conserves the redox energy in a proton gradient. The sequence is that of NADH-quinone oxidoreductase subunit D 1 from Sinorhizobium medicae (strain WSM419) (Ensifer medicae).